The primary structure comprises 163 residues: ECF RNA polymerase sigma factor SigM (163 aa).

The Polymerase core binding motif lies at 30-43 (DLLQETFMRAYIHI). Positions 127–146 (YKEASHIMNISEANFKSVLF) form a DNA-binding region, H-T-H motif.

Belongs to the sigma-70 factor family. ECF subfamily. As to quaternary structure, interacts with the N-terminus of YhdL, which is probably its anti-sigma factor. Interacts transiently with the RNAP core.

Functionally, sigma factors are initiation factors that promote the attachment of RNA polymerase (RNAP) to specific initiation sites and are then released. Extracytoplasmic function (ECF) sigma factors are held in an inactive form by a cognate anti-sigma factor (YhdL) until released. This sigma factor is involved in the maintenance of membrane and cell wall integrity in response to environmental stresses including salt, acid, ethanol and antibiotics stress. Partially regulates transcription from a number of genes including disA. Associates with RNAP core under all growth phases. This is ECF RNA polymerase sigma factor SigM (sigM) from Bacillus subtilis (strain 168).